Reading from the N-terminus, the 154-residue chain is Myoglobin (154 aa).

Residues 2–148 (GLSDGEWQSV…FRNDIAAKYK (147 aa)) enclose the Globin domain. Residue S4 is modified to Phosphoserine. Residue H65 coordinates nitrite. H65 is a binding site for O2. The residue at position 68 (T68) is a Phosphothreonine. A heme b-binding site is contributed by H94.

It belongs to the globin family. In terms of assembly, monomeric.

The protein resides in the cytoplasm. The protein localises to the sarcoplasm. It carries out the reaction Fe(III)-heme b-[protein] + nitric oxide + H2O = Fe(II)-heme b-[protein] + nitrite + 2 H(+). It catalyses the reaction H2O2 + AH2 = A + 2 H2O. Its function is as follows. Monomeric heme protein which primary function is to store oxygen and facilitate its diffusion within muscle tissues. Reversibly binds oxygen through a pentacoordinated heme iron and enables its timely and efficient release as needed during periods of heightened demand. Depending on the oxidative conditions of tissues and cells, and in addition to its ability to bind oxygen, it also has a nitrite reductase activity whereby it regulates the production of bioactive nitric oxide. Under stress conditions, like hypoxia and anoxia, it also protects cells against reactive oxygen species thanks to its pseudoperoxidase activity. This Perodicticus potto edwarsi (Potto) protein is Myoglobin (MB).